Here is a 303-residue protein sequence, read N- to C-terminus: UDP-3-O-acyl-N-acetylglucosamine deacetylase (303 aa).

The Zn(2+) site is built by His78, His237, and Asp241. The active-site Proton donor is the His264.

The protein belongs to the LpxC family. Requires Zn(2+) as cofactor.

The catalysed reaction is a UDP-3-O-[(3R)-3-hydroxyacyl]-N-acetyl-alpha-D-glucosamine + H2O = a UDP-3-O-[(3R)-3-hydroxyacyl]-alpha-D-glucosamine + acetate. Its pathway is glycolipid biosynthesis; lipid IV(A) biosynthesis; lipid IV(A) from (3R)-3-hydroxytetradecanoyl-[acyl-carrier-protein] and UDP-N-acetyl-alpha-D-glucosamine: step 2/6. Its function is as follows. Catalyzes the hydrolysis of UDP-3-O-myristoyl-N-acetylglucosamine to form UDP-3-O-myristoylglucosamine and acetate, the committed step in lipid A biosynthesis. The chain is UDP-3-O-acyl-N-acetylglucosamine deacetylase from Xanthomonas axonopodis pv. citri (strain 306).